We begin with the raw amino-acid sequence, 809 residues long: Pentatricopeptide repeat-containing protein At1g11290, chloroplastic (809 aa).

The transit peptide at 1–46 (MSSQLVQFSTVPQIPNPPSRHRHFLSERNYIPANVYEHPAALLLER) directs the protein to the chloroplast. 16 PPR repeats span residues 68–98 (EHFF…IDSK), 99–133 (LNVL…DVEP), 134–168 (VVYN…GFSL), 169–199 (DLFA…MPER), 200–234 (DLVS…NLKP), 235–269 (SFIT…GFDS), 270–300 (LVNI…MLER), 301–335 (NVVS…GVKP), 336–370 (TDVS…GLDR), 371–401 (NVSV…LQSR), 402–436 (TLVS…TVKP), 437–471 (DTFT…CLDK), 472–502 (NVFV…MSER), 503–537 (HVTT…TIKP), 538–568 (NGVT…MKEN), and 574–604 (SMDH…MPVK). The type E motif stretch occupies residues 609 to 684 (VYGAMLGACQ…TPGCSMVEIK (76 aa)). Residues 685 to 715 (NEVHSFFSGSTAHPDSKKIYAFLEKLICHIK) are type E(+) motif. Residues 716–809 (EAGYVPDTNL…NGACSCGDYW (94 aa)) form a type DYW motif region.

Belongs to the PPR family. PCMP-H subfamily.

The protein localises to the plastid. The protein resides in the chloroplast. Functionally, involved in multiple sites RNA editing events in chloroplasts. Involved in the editing of the site 7 of ndhB (ndhB-7) and site 5 of ndhD (ndhD-5) transcripts, which are two plastid-encoded subunits of the chloroplast NAD(P)H dehydrogenase (NDH) complex. Involved in the editing of the site 3 of rpoB (rpoB-3) transcript. Required for the activity of the NDH complex of the photosynthetic electron transport chain. Possesses low endoribonuclease activity in vitro. In Arabidopsis thaliana (Mouse-ear cress), this protein is Pentatricopeptide repeat-containing protein At1g11290, chloroplastic (PCMP-H40).